The chain runs to 660 residues: GTP-binding protein BRASSINAZOLE INSENSITIVE PALE GREEN 2, chloroplastic (660 aa).

The N-terminal 53 residues, 1–53 (MVVLISSTVTICNVKPKLEDGNFRVSRLIHRPEVPFFSGLSNEKKKKCAVSVM), are a transit peptide targeting the chloroplast. 2 disordered regions span residues 127–158 (EGDEHVENDELAGFEMVDDDADEEEEGEDDEM) and 191–212 (NDVELDGFAPAGVGYGNVTEEK). Residues 130–158 (EHVENDELAGFEMVDDDADEEEEGEDDEM) are compositionally biased toward acidic residues. The CP-type G domain maps to 273–457 (STRLIKPMSN…MYDTPGLLHP (185 aa)).

This sequence belongs to the TRAFAC class YlqF/YawG GTPase family. Binds to chloroplast 16S and 23S ribosomal RNAs. As to expression, mostly expressed in stems, petioles, leaves and flowers and, at low levels, also in roots.

Its subcellular location is the plastid. It is found in the chloroplast stroma. Its function is as follows. Required for brassinosteroid- (BR) mediated post-transcriptional and translational regulation in the chloroplast, including accumulation of chloroplast rRNA. Involved in chloroplast differentiation. This chain is GTP-binding protein BRASSINAZOLE INSENSITIVE PALE GREEN 2, chloroplastic, found in Arabidopsis thaliana (Mouse-ear cress).